We begin with the raw amino-acid sequence, 274 residues long: MQFSKMHGLGNDFVVVDGVTQNVFFTPETIRRLANRHCGIGFDQLLIVEAPYDPELDFHYRIFNADGSEVSQCGNGARCFARFVTLKGLTNKKDIAVSTQKGNMVLTVKDDNQIRVNMGEPIWEPAKIPFTANKFEKNYILRTDIQTVLCGAVSIGNPHCVVQVDDIQTANVEQLGPLLENHERFPERVNAGFMQIINKEHIKLRVYERGAGETQACGSGACAAVAVGIMQGLLNNNVQVDLPGGSLMIEWNGVGHPLYMTGEATHIYDGFITL.

Asn11, Gln44, and Asn64 together coordinate substrate. Cys73 functions as the Proton donor in the catalytic mechanism. Residues Gly74–Asn75, Asn157, Asn190, and Glu208–Arg209 each bind substrate. Cys217 acts as the Proton acceptor in catalysis. Gly218–Ser219 serves as a coordination point for substrate.

The protein belongs to the diaminopimelate epimerase family. Homodimer.

It localises to the cytoplasm. The enzyme catalyses (2S,6S)-2,6-diaminopimelate = meso-2,6-diaminopimelate. The protein operates within amino-acid biosynthesis; L-lysine biosynthesis via DAP pathway; DL-2,6-diaminopimelate from LL-2,6-diaminopimelate: step 1/1. Catalyzes the stereoinversion of LL-2,6-diaminopimelate (L,L-DAP) to meso-diaminopimelate (meso-DAP), a precursor of L-lysine and an essential component of the bacterial peptidoglycan. This chain is Diaminopimelate epimerase, found in Haemophilus influenzae (strain PittEE).